A 518-amino-acid chain; its full sequence is Probable lysine--tRNA ligase, cytoplasmic (518 aa).

This sequence belongs to the class-II aminoacyl-tRNA synthetase family. In terms of assembly, homodimer.

It localises to the cytoplasm. The catalysed reaction is tRNA(Lys) + L-lysine + ATP = L-lysyl-tRNA(Lys) + AMP + diphosphate. This chain is Probable lysine--tRNA ligase, cytoplasmic, found in Enterocytozoon bieneusi (strain H348) (Microsporidian parasite).